The following is a 48-amino-acid chain: Ribulose bisphosphate carboxylase large chain (48 aa).

Belongs to the RuBisCO large chain family. Type I subfamily. In terms of assembly, heterohexadecamer of 8 large chains and 8 small chains.

It localises to the plastid. It is found in the chloroplast. The catalysed reaction is 2 (2R)-3-phosphoglycerate + 2 H(+) = D-ribulose 1,5-bisphosphate + CO2 + H2O. It carries out the reaction D-ribulose 1,5-bisphosphate + O2 = 2-phosphoglycolate + (2R)-3-phosphoglycerate + 2 H(+). Functionally, ruBisCO catalyzes two reactions: the carboxylation of D-ribulose 1,5-bisphosphate, the primary event in carbon dioxide fixation, as well as the oxidative fragmentation of the pentose substrate in the photorespiration process. Both reactions occur simultaneously and in competition at the same active site. This Pinus pinaster (Maritime pine) protein is Ribulose bisphosphate carboxylase large chain (rbcL).